We begin with the raw amino-acid sequence, 213 residues long: Major fimbrial subunit (213 aa).

A signal peptide spans 1 to 20; that stretch reads MKKTLLGSLILLAFAGNVQA. Residues cysteine 41 and cysteine 81 are joined by a disulfide bond.

This sequence belongs to the fimbrial protein family.

Its subcellular location is the fimbrium. Functionally, mediates adherence to oropharyngeal epithelial cells. Helps the airway colonization process. This is Major fimbrial subunit (hifA) from Haemophilus influenzae.